The following is a 309-amino-acid chain: Taste receptor type 2 member 43 (309 aa).

Methionine 1 is a topological domain (extracellular). Residues 2–22 traverse the membrane as a helical segment; the sequence is ITFLPIIFSSLVVVTFVIGNF. Topologically, residues 23 to 46 are cytoplasmic; the sequence is ANGFIALVNSIEWFKRQKISFADQ. Residues 47–67 traverse the membrane as a helical segment; the sequence is ILTALAVSRVGLLWVLLLNWY. Residues 68–86 lie on the Extracellular side of the membrane; the sequence is LTVLNPAFNSVEVRTTAYN. A helical transmembrane segment spans residues 87-107; that stretch reads IWAVINHFSNWLATSLSIFYL. The Cytoplasmic segment spans residues 108–126; it reads LKIANFSNFIFLHLKRRVK. The chain crosses the membrane as a helical span at residues 127–147; sequence SVILVMLLGPLLFLACHLFMI. At 148–178 the chain is on the extracellular side; sequence NMNEIVRTKEFDGNMTWKIKLKSAMYFSNMT. N-linked (GlcNAc...) asparagine glycosylation is found at asparagine 161 and asparagine 176. The helical transmembrane segment at 179 to 199 threads the bilayer; that stretch reads VTMVANLVPFTLTLLSFLLLI. The Cytoplasmic portion of the chain corresponds to 200–229; it reads CSLCKHLKKMQLHGKGSQDPSTKVHIKALQ. The helical transmembrane segment at 230–250 threads the bilayer; it reads TVISFLLLCAIYFLSIMISVW. The Extracellular portion of the chain corresponds to 251–259; the sequence is SFGSLENKP. A helical membrane pass occupies residues 260 to 280; that stretch reads VFMFCKAIRFSYPSIHPFILI. Topologically, residues 281–309 are cytoplasmic; that stretch reads WGNKKLKQTFLSVFWQMRYWVKGEKTSSP.

This sequence belongs to the G-protein coupled receptor T2R family.

It localises to the membrane. It is found in the cell projection. Its subcellular location is the cilium membrane. Its function is as follows. Gustducin-coupled receptor immplicated in the perception of bitter compounds in the oral cavity and the gastrointestinal tract. Signals through PLCB2 and the calcium-regulated cation channel TRPM5. Activated by the sulfonyl amide sweeteners saccharin and acesulfame K. In airway epithelial cells, binding of bitter compounds increases the intracellular calcium ion concentration and stimulates ciliary beat frequency. May act as chemosensory receptors in airway epithelial cells to detect and eliminate potential noxious agents from the airways. This Pan paniscus (Pygmy chimpanzee) protein is Taste receptor type 2 member 43 (TAS2R43).